The primary structure comprises 1637 residues: Probable serine/threonine-protein kinase gdt2 (1637 aa).

Positions 1–19 (MNYILYILLILIIFSINNT) are cleaved as a signal peptide. Residues 20–896 (FSIGSFVYTP…IPVEKINLLP (877 aa)) are Extracellular-facing. A helical transmembrane segment spans residues 897–917 (IIVPICVTVLVLLSILIVFFG). The Cytoplasmic portion of the chain corresponds to 918–1637 (ARYYKHKKRR…NNNNNNNNNN (720 aa)). The segment covering 977–990 (SDIQTQSENNNLEP) has biased composition (polar residues). A disordered region spans residues 977-1000 (SDIQTQSENNNLEPTTVETTTTTT). Residues 991–1000 (TTVETTTTTT) are compositionally biased toward low complexity. A Protein kinase domain is found at 1290-1547 (IIIKNYISEG…LSKYLKHLLK (258 aa)). Residues 1296–1304 (ISEGTFGIV) and K1317 each bind ATP. The Proton acceptor role is filled by D1408. The tract at residues 1557–1637 (DKDKKNKKKN…NNNNNNNNNN (81 aa)) is disordered. Composition is skewed to low complexity over residues 1568–1589 (NNNN…NNNN) and 1597–1637 (NNNI…NNNN).

It in the N-terminal section; belongs to the GDT family. In the C-terminal section; belongs to the protein kinase superfamily. TKL Ser/Thr protein kinase family.

Its subcellular location is the membrane. It carries out the reaction L-seryl-[protein] + ATP = O-phospho-L-seryl-[protein] + ADP + H(+). It catalyses the reaction L-threonyl-[protein] + ATP = O-phospho-L-threonyl-[protein] + ADP + H(+). Its function is as follows. Regulates the transition between growth and differentiation. In Dictyostelium discoideum (Social amoeba), this protein is Probable serine/threonine-protein kinase gdt2 (gdt2).